We begin with the raw amino-acid sequence, 385 residues long: DNA replication and repair protein RecF (385 aa).

30-37 serves as a coordination point for ATP; that stretch reads GRNGQGKT.

This sequence belongs to the RecF family.

It localises to the cytoplasm. The RecF protein is involved in DNA metabolism; it is required for DNA replication and normal SOS inducibility. RecF binds preferentially to single-stranded, linear DNA. It also seems to bind ATP. In Leifsonia xyli subsp. xyli (strain CTCB07), this protein is DNA replication and repair protein RecF.